A 207-amino-acid chain; its full sequence is Large ribosomal subunit protein uL4 (207 aa).

Positions 53 to 85 (ERSDVARTGKKFGRQKGGGTARHGDRKAPIFIG) are disordered.

Belongs to the universal ribosomal protein uL4 family. Part of the 50S ribosomal subunit.

Its function is as follows. One of the primary rRNA binding proteins, this protein initially binds near the 5'-end of the 23S rRNA. It is important during the early stages of 50S assembly. It makes multiple contacts with different domains of the 23S rRNA in the assembled 50S subunit and ribosome. Functionally, forms part of the polypeptide exit tunnel. The chain is Large ribosomal subunit protein uL4 from Novosphingobium aromaticivorans (strain ATCC 700278 / DSM 12444 / CCUG 56034 / CIP 105152 / NBRC 16084 / F199).